The following is a 180-amino-acid chain: Large ribosomal subunit protein uL10 (180 aa).

The protein belongs to the universal ribosomal protein uL10 family. In terms of assembly, part of the ribosomal stalk of the 50S ribosomal subunit. The N-terminus interacts with L11 and the large rRNA to form the base of the stalk. The C-terminus forms an elongated spine to which L12 dimers bind in a sequential fashion forming a multimeric L10(L12)X complex.

In terms of biological role, forms part of the ribosomal stalk, playing a central role in the interaction of the ribosome with GTP-bound translation factors. The polypeptide is Large ribosomal subunit protein uL10 (Thermosipho africanus (strain TCF52B)).